The primary structure comprises 204 residues: Somatotropin (204 aa).

Positions 1 to 17 are cleaved as a signal peptide; it reads MDRVVLLLSVLSLGVSS. The residue at position 18 (Q18) is a Pyrrolidone carboxylic acid. 2 disulfides stabilise this stretch: C69/C177 and C194/C202.

The protein belongs to the somatotropin/prolactin family.

The protein localises to the secreted. Its function is as follows. Growth hormone plays an important role in growth control and is involved in the regulation of several anabolic processes. Implicated as an osmoregulatory substance important for seawater adaptation. This Seriola quinqueradiata (Five-ray yellowtail) protein is Somatotropin (gh).